The primary structure comprises 200 residues: Holliday junction branch migration complex subunit RuvA (200 aa).

A domain I region spans residues 1–64; that stretch reads MIGHLRGIIV…EDAHTLYGFH (64 aa). A domain II region spans residues 65–143; it reads NDHERRLFRA…RWHTNDTPSP (79 aa). Residues 133-152 form a disordered region; sequence SRWHTNDTPSPEGLRSSNTQ. A flexible linker region spans residues 144 to 148; sequence EGLRS. The interval 149–200 is domain III; that stretch reads SNTQPTQDAISALMALGYKPQEAKRAIDAIQKPDLSAETLIRLALKQMVLGT.

It belongs to the RuvA family. In terms of assembly, homotetramer. Forms an RuvA(8)-RuvB(12)-Holliday junction (HJ) complex. HJ DNA is sandwiched between 2 RuvA tetramers; dsDNA enters through RuvA and exits via RuvB. An RuvB hexamer assembles on each DNA strand where it exits the tetramer. Each RuvB hexamer is contacted by two RuvA subunits (via domain III) on 2 adjacent RuvB subunits; this complex drives branch migration. In the full resolvosome a probable DNA-RuvA(4)-RuvB(12)-RuvC(2) complex forms which resolves the HJ.

It localises to the cytoplasm. Its function is as follows. The RuvA-RuvB-RuvC complex processes Holliday junction (HJ) DNA during genetic recombination and DNA repair, while the RuvA-RuvB complex plays an important role in the rescue of blocked DNA replication forks via replication fork reversal (RFR). RuvA specifically binds to HJ cruciform DNA, conferring on it an open structure. The RuvB hexamer acts as an ATP-dependent pump, pulling dsDNA into and through the RuvAB complex. HJ branch migration allows RuvC to scan DNA until it finds its consensus sequence, where it cleaves and resolves the cruciform DNA. This Coxiella burnetii (strain CbuK_Q154) (Coxiella burnetii (strain Q154)) protein is Holliday junction branch migration complex subunit RuvA.